Here is a 260-residue protein sequence, read N- to C-terminus: Small ribosomal subunit protein uS2 (260 aa).

Belongs to the universal ribosomal protein uS2 family.

This chain is Small ribosomal subunit protein uS2, found in Mesorhizobium japonicum (strain LMG 29417 / CECT 9101 / MAFF 303099) (Mesorhizobium loti (strain MAFF 303099)).